The chain runs to 115 residues: NAD(P)H-quinone oxidoreductase subunit M (115 aa).

Belongs to the complex I NdhM subunit family. As to quaternary structure, NDH-1 can be composed of about 15 different subunits; different subcomplexes with different compositions have been identified which probably have different functions.

Its subcellular location is the cellular thylakoid membrane. The enzyme catalyses a plastoquinone + NADH + (n+1) H(+)(in) = a plastoquinol + NAD(+) + n H(+)(out). It carries out the reaction a plastoquinone + NADPH + (n+1) H(+)(in) = a plastoquinol + NADP(+) + n H(+)(out). Functionally, NDH-1 shuttles electrons from an unknown electron donor, via FMN and iron-sulfur (Fe-S) centers, to quinones in the respiratory and/or the photosynthetic chain. The immediate electron acceptor for the enzyme in this species is believed to be plastoquinone. Couples the redox reaction to proton translocation, and thus conserves the redox energy in a proton gradient. Cyanobacterial NDH-1 also plays a role in inorganic carbon-concentration. The chain is NAD(P)H-quinone oxidoreductase subunit M from Synechococcus sp. (strain WH7803).